The primary structure comprises 1167 residues: C5a peptidase (1167 aa).

Positions 1–31 (MRKKQKLPFDKLAIALMSTSILLNAQSDIKA) are cleaved as a signal peptide. Residues 34–52 (VTEDTPVTEQAVETPQPTA) are compositionally biased toward polar residues. Residues 34-73 (VTEDTPVTEQAVETPQPTAVSEEVPSSKETKTPQTPDDAE) are disordered. Positions 99–581 (KATIRDLNDP…AGAVDAKKAS (483 aa)) constitute a Peptidase S8 domain. Active-site charge relay system residues include D130, H193, and S512. The segment at 1029–1133 (EGHSNKPEQD…RDQLPTTNDK (105 aa)) is disordered. 4 tandem repeats follow at residues 1034 to 1050 (KPEQDGSGQTPDKKPEA), 1051 to 1067 (KPEQDGSDQAPDKKPEA), 1068 to 1084 (KPEQDGSGQTPDKKPET), and 1085 to 1101 (KPEKDSSGQTPGKTPQK). Positions 1034–1101 (KPEQDGSGQT…GQTPGKTPQK (68 aa)) are 4 X 17 AA tandem repeats. Composition is skewed to basic and acidic residues over residues 1044-1071 (PDKKPEAKPEQDGSDQAPDKKPEAKPEQ) and 1078-1090 (PDKKPETKPEKDS). Polar residues-rich tracts occupy residues 1092-1106 (GQTPGKTPQKGQPSR) and 1120-1130 (KASTRDQLPTT). The LPXTG sorting signal motif lies at 1127–1131 (LPTTN). A Pentaglycyl murein peptidoglycan amidated threonine modification is found at T1130. The propeptide at 1131-1167 (NDKDTNRLHLLKLVMTTFFFGLVAHIFKTKRQKETKK) is removed by sortase.

It belongs to the peptidase S8 family. Post-translationally, cleaved by SpeB protease; leading to its degradation. Degradation by SpeB is probably strictly regulated to preserve integrity of C5a peptidase.

It localises to the secreted. The protein resides in the cell wall. It catalyses the reaction The primary cleavage site is at 67-His-|-Lys-68 in human C5a with a minor secondary cleavage site at 58-Ala-|-Ser-59.. In terms of biological role, this virulence factor of S.pyogenes specifically cleaves the human serum chemotaxin C5a at '68-Lys-|-Asp-69' bond near its C-terminus, destroying its ability to serve as a chemoattractant. The sequence is that of C5a peptidase (scpA) from Streptococcus pyogenes.